The chain runs to 158 residues: Low molecular weight phosphotyrosine protein phosphatase (158 aa).

An N-acetylalanine modification is found at A2. C13 (nucleophile) is an active-site residue. Residue R19 is part of the active site. The active-site Proton donor is D130. A phosphotyrosine mark is found at Y132 and Y133.

This sequence belongs to the low molecular weight phosphotyrosine protein phosphatase family.

It is found in the cytoplasm. It catalyses the reaction O-phospho-L-tyrosyl-[protein] + H2O = L-tyrosyl-[protein] + phosphate. The catalysed reaction is a phosphate monoester + H2O = an alcohol + phosphate. Functionally, acts on tyrosine phosphorylated proteins, low-MW aryl phosphates and natural and synthetic acyl phosphates. The polypeptide is Low molecular weight phosphotyrosine protein phosphatase (ACP1) (Gallus gallus (Chicken)).